We begin with the raw amino-acid sequence, 148 residues long: Endoribonuclease YbeY (148 aa).

Residues His-113, His-117, and His-123 each contribute to the Zn(2+) site.

The protein belongs to the endoribonuclease YbeY family. Requires Zn(2+) as cofactor.

It is found in the cytoplasm. Functionally, single strand-specific metallo-endoribonuclease involved in late-stage 70S ribosome quality control and in maturation of the 3' terminus of the 16S rRNA. This chain is Endoribonuclease YbeY, found in Borrelia duttonii (strain Ly).